A 225-amino-acid chain; its full sequence is NAD(P)H-quinone oxidoreductase subunit K, chloroplastic (225 aa).

Residues Cys-43, Cys-44, Cys-108, and Cys-139 each contribute to the [4Fe-4S] cluster site.

The protein belongs to the complex I 20 kDa subunit family. NDH is composed of at least 16 different subunits, 5 of which are encoded in the nucleus. The cofactor is [4Fe-4S] cluster.

It localises to the plastid. It is found in the chloroplast thylakoid membrane. It carries out the reaction a plastoquinone + NADH + (n+1) H(+)(in) = a plastoquinol + NAD(+) + n H(+)(out). The enzyme catalyses a plastoquinone + NADPH + (n+1) H(+)(in) = a plastoquinol + NADP(+) + n H(+)(out). In terms of biological role, NDH shuttles electrons from NAD(P)H:plastoquinone, via FMN and iron-sulfur (Fe-S) centers, to quinones in the photosynthetic chain and possibly in a chloroplast respiratory chain. The immediate electron acceptor for the enzyme in this species is believed to be plastoquinone. Couples the redox reaction to proton translocation, and thus conserves the redox energy in a proton gradient. This is NAD(P)H-quinone oxidoreductase subunit K, chloroplastic from Arabis hirsuta (Hairy rock-cress).